Here is a 179-residue protein sequence, read N- to C-terminus: Natural killer cells antigen CD94 (179 aa).

Residues 1–10 (MAVFKTTLWR) lie on the Cytoplasmic side of the membrane. Residues 11–31 (LISGTLGIICLSLMATLGILL) form a helical; Signal-anchor for type II membrane protein membrane-spanning segment. Topologically, residues 32–179 (KNSFTKLSVE…NRYICKQQLI (148 aa)) are extracellular. Disulfide bonds link C58-C70 and C61-C72. A C-type lectin domain is found at 68-175 (YRCNCYFISS…CETKNRYICK (108 aa)). Residues N83 and N132 are each glycosylated (N-linked (GlcNAc...) asparagine). 2 disulfide bridges follow: C89/C174 and C152/C166.

In terms of assembly, can form disulfide-bonded heterodimer with NKG2 family members KLRC1 and KLRC2. KLRD1-KLRC1 heterodimer interacts with peptide-bound MHC-E-B2M heterotrimeric complex. KLRD1 plays a prominent role in directly interacting with MHC-E. KLRD1-KLRC1 interacts with much higher affinity with peptide-bound MHC-E-B2M than KLRD1-KLRC2. Interacts with the adapter protein TYROBP/DAP12; this interaction is required for cell surface expression and cell activation. Natural killer cells.

It is found in the cell membrane. In terms of biological role, immune receptor involved in self-nonself discrimination. In complex with KLRC1 or KLRC2 on cytotoxic and regulatory lymphocyte subsets, recognizes non-classical major histocompatibility (MHC) class Ib molecule MHC-E loaded with self-peptides derived from the signal sequence of classical MHC class Ia and non-classical MHC class Ib molecules. Enables cytotoxic cells to monitor the expression of MHC class I molecules in healthy cells and to tolerate self. Primarily functions as a ligand binding subunit as it lacks the capacity to signal. KLRD1-KLRC1 acts as an immune inhibitory receptor. Key inhibitory receptor on natural killer (NK) cells that regulates their activation and effector functions. Dominantly counteracts T cell receptor signaling on a subset of memory/effector CD8-positive T cells as part of an antigen-driven response to avoid autoimmunity. On intraepithelial CD8-positive gamma-delta regulatory T cells triggers TGFB1 secretion, which in turn limits the cytotoxic programming of intraepithelial CD8-positive alpha-beta T cells, distinguishing harmless from pathogenic antigens. In MHC-E-rich tumor microenvironment, acts as an immune inhibitory checkpoint and may contribute to progressive loss of effector functions of NK cells and tumor-specific T cells, a state known as cell exhaustion. Upon MHC-E-peptide binding, transmits intracellular signals through KLRC1 immunoreceptor tyrosine-based inhibition motifs (ITIMs) by recruiting INPP5D/SHIP-1 and INPPL1/SHIP-2 tyrosine phosphatases to ITIMs, and ultimately opposing signals transmitted by activating receptors through dephosphorylation of proximal signaling molecules. Its function is as follows. KLRD1-KLRC2 acts as an immune activating receptor. On cytotoxic lymphocyte subsets recognizes MHC-E loaded with signal sequence-derived peptides from non-classical MHC class Ib MHC-G molecules, likely playing a role in the generation and effector functions of adaptive NK cells and in maternal-fetal tolerance during pregnancy. Regulates the effector functions of terminally differentiated cytotoxic lymphocyte subsets, and in particular may play a role in adaptive NK cell response to viral infection. Upon MHC-E-peptide binding, transmits intracellular signals via the adapter protein TYROBP/DAP12, triggering the phosphorylation of proximal signaling molecules and cell activation. The polypeptide is Natural killer cells antigen CD94 (KLRD1) (Macaca mulatta (Rhesus macaque)).